The sequence spans 142 residues: SLSDKDKAVVKALWAKIGSRADEIGAEALGRMLTVYPQTKTYFSHWSDLSPGSGPVKKHGKTIMGAVGDAVSKIDDLVGALSALSELHAFKLRIDPANFKILAHNVIVVIGMLFPGDFTPEVHMSVDKFFQNLALALSEKYR.

At S1 the chain carries N-acetylserine. The Globin domain occupies 1–142; the sequence is SLSDKDKAVV…LALALSEKYR (142 aa). H59 is a binding site for O2. H88 is a heme b binding site.

The protein belongs to the globin family. Heterotetramer of two alpha chains and two beta chains. Red blood cells.

In terms of biological role, involved in oxygen transport from gills to the various peripheral tissues. This is Hemoglobin subunit alpha (hba) from Carassius auratus (Goldfish).